Here is a 252-residue protein sequence, read N- to C-terminus: Chitooligosaccharide deacetylase (252 aa).

His61 and His125 together coordinate Mg(2+).

The protein belongs to the YdjC deacetylase family. ChbG subfamily. Homodimer. Mg(2+) is required as a cofactor.

It localises to the cytoplasm. It carries out the reaction N,N'-diacetylchitobiose + H2O = N-acetyl-beta-D-glucosaminyl-(1-&gt;4)-D-glucosamine + acetate. It catalyses the reaction diacetylchitobiose-6'-phosphate + H2O = N'-monoacetylchitobiose-6'-phosphate + acetate. Its pathway is glycan degradation; chitin degradation. Involved in the degradation of chitin. ChbG is essential for growth on the acetylated chitooligosaccharides chitobiose and chitotriose but is dispensable for growth on cellobiose and chitosan dimer, the deacetylated form of chitobiose. Deacetylation of chitobiose-6-P and chitotriose-6-P is necessary for both the activation of the chb promoter by the regulatory protein ChbR and the hydrolysis of phosphorylated beta-glucosides by the phospho-beta-glucosidase ChbF. Catalyzes the removal of only one acetyl group from chitobiose-6-P to yield monoacetylchitobiose-6-P, the inducer of ChbR and the substrate of ChbF. The chain is Chitooligosaccharide deacetylase from Salmonella paratyphi A (strain ATCC 9150 / SARB42).